Here is a 166-residue protein sequence, read N- to C-terminus: Large ribosomal subunit protein mL49 (166 aa).

Residues 54-77 (PTKIPEPPKHKHYPTPSGWQPPRD) are disordered.

The protein belongs to the mitochondrion-specific ribosomal protein mL49 family. As to quaternary structure, component of the mitochondrial ribosome large subunit (39S) which comprises a 16S rRNA and about 50 distinct proteins. Interacts with OXA1L.

The protein localises to the mitochondrion. In Mus musculus (Mouse), this protein is Large ribosomal subunit protein mL49 (Mrpl49).